The primary structure comprises 93 residues: Acylphosphatase (93 aa).

The 88-residue stretch at 6–93 folds into the Acylphosphatase-like domain; it reads RAHILVSGEV…GDLGPFSVRH (88 aa). Active-site residues include Arg-21 and Asn-39.

This sequence belongs to the acylphosphatase family.

It catalyses the reaction an acyl phosphate + H2O = a carboxylate + phosphate + H(+). The polypeptide is Acylphosphatase (acyP) (Anaeromyxobacter sp. (strain Fw109-5)).